A 109-amino-acid chain; its full sequence is Phosphoribosyl-ATP pyrophosphatase (109 aa).

It belongs to the PRA-PH family.

Its subcellular location is the cytoplasm. The enzyme catalyses 1-(5-phospho-beta-D-ribosyl)-ATP + H2O = 1-(5-phospho-beta-D-ribosyl)-5'-AMP + diphosphate + H(+). It functions in the pathway amino-acid biosynthesis; L-histidine biosynthesis; L-histidine from 5-phospho-alpha-D-ribose 1-diphosphate: step 2/9. In Alkalilimnicola ehrlichii (strain ATCC BAA-1101 / DSM 17681 / MLHE-1), this protein is Phosphoribosyl-ATP pyrophosphatase.